The chain runs to 505 residues: Catalase (505 aa).

Active-site residues include H56 and N129. Y339 contributes to the heme binding site.

This sequence belongs to the catalase family. Requires heme as cofactor.

The protein localises to the cytoplasm. It carries out the reaction 2 H2O2 = O2 + 2 H2O. Decomposes hydrogen peroxide into water and oxygen; serves to protect cells from the toxic effects of hydrogen peroxide. The polypeptide is Catalase (katA) (Helicobacter pylori (strain ATCC 700392 / 26695) (Campylobacter pylori)).